We begin with the raw amino-acid sequence, 370 residues long: Cell division protein DivIB (370 aa).

Residues 1–65 (MKKKKDEELT…SNKKGTKRIV (65 aa)) are disordered. Residues 1–74 (MKKKKDEELT…VKEQRLSRQK (74 aa)) lie on the Cytoplasmic side of the membrane. Basic residues-rich tracts occupy residues 25-34 (SRFKRKRKAT) and 47-63 (RNNRNKVKKSNKKGTKR). The helical transmembrane segment at 75–95 (LGILIGSTLIVIALFFGYFYS) threads the bilayer. The Extracellular portion of the chain corresponds to 96–370 (SISRVQKFSV…STVNTQQDID (275 aa)). The 72-residue stretch at 98–169 (SRVQKFSVSG…GKVKIKVKEN (72 aa)) folds into the POTRA domain. Positions 295-370 (SGWTDEAKAA…STVNTQQDID (76 aa)) are disordered. 2 stretches are compositionally biased toward low complexity: residues 304-314 (ASESSKSAESS) and 327-342 (SESADSTSASADSTET). Positions 356-370 (SSNAESTVNTQQDID) are enriched in polar residues.

The protein belongs to the FtsQ/DivIB family. DivIB subfamily.

Its subcellular location is the cell membrane. Its function is as follows. Cell division protein that may be involved in stabilizing or promoting the assembly of the division complex. In Pediococcus pentosaceus (strain ATCC 25745 / CCUG 21536 / LMG 10740 / 183-1w), this protein is Cell division protein DivIB.